The following is an 80-amino-acid chain: MSTAIWILLLIVALGVGVFGGIFIARKQIEKEIGEHPRLTPEAIREMMSQMGQKPSEAKIQQTYRNIIKQSKAAVSKGKK.

The helical transmembrane segment at 4-24 (AIWILLLIVALGVGVFGGIFI) threads the bilayer.

It belongs to the UPF0154 family.

It is found in the cell membrane. This chain is UPF0154 protein MGAS10270_Spy0296, found in Streptococcus pyogenes serotype M2 (strain MGAS10270).